The following is a 335-amino-acid chain: Large ribosomal subunit protein uL10 (335 aa).

The tract at residues 306–335 is disordered; it reads VEETVEEEEEEEEEEDAEEEAAAGLGALFG. A compositionally biased stretch (acidic residues) spans 308 to 326; it reads ETVEEEEEEEEEEDAEEEA.

The protein belongs to the universal ribosomal protein uL10 family. Part of the 50S ribosomal subunit. Forms part of the ribosomal stalk which helps the ribosome interact with GTP-bound translation factors. Forms a heptameric L10(L12)2(L12)2(L12)2 complex, where L10 forms an elongated spine to which the L12 dimers bind in a sequential fashion.

Functionally, forms part of the ribosomal stalk, playing a central role in the interaction of the ribosome with GTP-bound translation factors. This is Large ribosomal subunit protein uL10 from Methanobrevibacter smithii (strain ATCC 35061 / DSM 861 / OCM 144 / PS).